Consider the following 168-residue polypeptide: 2-oxo-4-hydroxy-4-carboxy-5-ureidoimidazoline decarboxylase (168 aa).

Catalysis depends on His-70, which acts as the Proton donor; for OHCU decarboxylase activity. Residues 70 to 79 (HPDLGERTEM) are compositionally biased toward basic and acidic residues. The interval 70-93 (HPDLGERTEMTDASEAEQASAELD) is disordered. Residues Pro-71, 83-87 (SEAEQ), and 118-122 (FVMAV) each bind substrate.

The protein belongs to the OHCU decarboxylase family.

It carries out the reaction 5-hydroxy-2-oxo-4-ureido-2,5-dihydro-1H-imidazole-5-carboxylate + H(+) = (S)-allantoin + CO2. It participates in purine metabolism; urate degradation; (S)-allantoin from urate: step 3/3. Catalyzes the stereoselective decarboxylation of 2-oxo-4-hydroxy-4-carboxy-5-ureidoimidazoline (OHCU) to (S)-allantoin. The sequence is that of 2-oxo-4-hydroxy-4-carboxy-5-ureidoimidazoline decarboxylase from Haloferax volcanii (strain ATCC 29605 / DSM 3757 / JCM 8879 / NBRC 14742 / NCIMB 2012 / VKM B-1768 / DS2) (Halobacterium volcanii).